The sequence spans 126 residues: Phosphoribosyl-AMP cyclohydrolase (126 aa).

Residue aspartate 77 coordinates Mg(2+). Cysteine 78 is a Zn(2+) binding site. Residues aspartate 79 and aspartate 81 each contribute to the Mg(2+) site. Residues cysteine 95 and cysteine 102 each coordinate Zn(2+).

Belongs to the PRA-CH family. In terms of assembly, homodimer. Requires Mg(2+) as cofactor. Zn(2+) serves as cofactor.

It localises to the cytoplasm. The enzyme catalyses 1-(5-phospho-beta-D-ribosyl)-5'-AMP + H2O = 1-(5-phospho-beta-D-ribosyl)-5-[(5-phospho-beta-D-ribosylamino)methylideneamino]imidazole-4-carboxamide. Its pathway is amino-acid biosynthesis; L-histidine biosynthesis; L-histidine from 5-phospho-alpha-D-ribose 1-diphosphate: step 3/9. In terms of biological role, catalyzes the hydrolysis of the adenine ring of phosphoribosyl-AMP. The sequence is that of Phosphoribosyl-AMP cyclohydrolase from Cellvibrio japonicus (strain Ueda107) (Pseudomonas fluorescens subsp. cellulosa).